The sequence spans 258 residues: Regulatory protein RecX (258 aa).

This sequence belongs to the RecX family.

The protein localises to the cytoplasm. Modulates RecA activity. The protein is Regulatory protein RecX of Streptococcus mutans serotype c (strain ATCC 700610 / UA159).